The primary structure comprises 203 residues: Nudix hydrolase 12, mitochondrial (203 aa).

The Nudix hydrolase domain occupies 18–166 (NFRLVSGCIP…WMQRALEEFL (149 aa)). A Nudix box motif is present at residues 66-87 (GGWEDDETVLEAASREAIEEAG). Mg(2+)-binding residues include Glu81 and Glu85.

The protein belongs to the Nudix hydrolase family. Mg(2+) is required as a cofactor. It depends on Mn(2+) as a cofactor. In terms of tissue distribution, expressed in roots, leaves, stems and inflorescences.

It localises to the mitochondrion. In terms of biological role, probably mediates the hydrolysis of some nucleoside diphosphate derivatives. The protein is Nudix hydrolase 12, mitochondrial (NUDT12) of Arabidopsis thaliana (Mouse-ear cress).